We begin with the raw amino-acid sequence, 134 residues long: Probable glycine cleavage system H protein (134 aa).

The Lipoyl-binding domain occupies 29 to 110 (TVLVGITDYA…PYGAWIAKIK (82 aa)). Lys-70 carries the N6-lipoyllysine modification.

Belongs to the GcvH family. In terms of assembly, the glycine cleavage system is composed of four proteins: P, T, L and H. It depends on (R)-lipoate as a cofactor.

Its function is as follows. The glycine cleavage system catalyzes the degradation of glycine. The H protein shuttles the methylamine group of glycine from the P protein to the T protein. The sequence is that of Probable glycine cleavage system H protein from Pyrococcus abyssi (strain GE5 / Orsay).